The sequence spans 228 residues: Ribonuclease 3 1 (228 aa).

The 124-residue stretch at 1 to 124 (MYKLLMFRDD…VIGAYYLDNN (124 aa)) folds into the RNase III domain. Glutamate 37 provides a ligand contact to Mg(2+). Aspartate 41 is an active-site residue. Mg(2+) is bound by residues serine 110 and glutamate 113. Residue glutamate 113 is part of the active site. A DRBM domain is found at 153 to 223 (DSKNRFQEWV…AENALANLNK (71 aa)).

It belongs to the ribonuclease III family. Homodimer. Mg(2+) is required as a cofactor.

The protein resides in the cytoplasm. It carries out the reaction Endonucleolytic cleavage to 5'-phosphomonoester.. Digests double-stranded RNA. Involved in the processing of primary rRNA transcript to yield the immediate precursors to the large and small rRNAs (23S and 16S). Processes some mRNAs, and tRNAs when they are encoded in the rRNA operon. Processes pre-crRNA and tracrRNA of type II CRISPR loci if present in the organism. The chain is Ribonuclease 3 1 from Nostoc sp. (strain PCC 7120 / SAG 25.82 / UTEX 2576).